Consider the following 660-residue polypeptide: Phosphatidylinositol-binding clathrin assembly protein (660 aa).

N-acetylserine is present on Ser-2. The 132-residue stretch at 14-145 (QHSVTGSAVS…VSYRQVAFDF (132 aa)) folds into the ENTH domain. A phosphoserine mark is found at Ser-16 and Ser-20. Residues 221 to 294 (KYFDMKKNQC…LEGKKIKDST (74 aa)) are interaction with PIMREG. Residue Lys-238 forms a Glycyl lysine isopeptide (Lys-Gly) (interchain with G-Cter in SUMO2) linkage. Residues Ser-303 and Ser-315 each carry the phosphoserine modification. A compositionally biased stretch (polar residues) spans 556 to 566 (GTTKNDVSWSQ). The tract at residues 556-580 (GTTKNDVSWSQPGEKKLTGGSNWQP) is disordered.

Belongs to the PICALM/SNAP91 family. Binds to clathrin; involves primarily the C-terminal sequences, but the full-length protein is required for full binding capacity. Binds phosphatidylinositol 4,5- bisphosphate. Interacts with PIMREG; this interaction may change the subcellular location into the nucleus. Interacts with AP2A1 (via its alpha-appendage domain). Interacts (via N-terminus) with VAMP2; VAMP3; VAMP7 and VAMP8 (Via N-terminus). Interacts with LC3/MAP1LC3A. In terms of tissue distribution, skins and livers of 1-week-old mice.

It localises to the cell membrane. Its subcellular location is the membrane. It is found in the clathrin-coated pit. The protein localises to the golgi apparatus. The protein resides in the cytoplasmic vesicle. It localises to the clathrin-coated vesicle. Its subcellular location is the nucleus. Functionally, cytoplasmic adapter protein that plays a critical role in clathrin-mediated endocytosis which is important in processes such as internalization of cell receptors, synaptic transmission or removal of apoptotic cells. Recruits AP-2 and attaches clathrin triskelions to the cytoplasmic side of plasma membrane leading to clathrin-coated vesicles (CCVs) assembly. Furthermore, regulates clathrin-coated vesicle size and maturation by directly sensing and driving membrane curvature. In addition to binding to clathrin, mediates the endocytosis of small R-SNARES (Soluble NSF Attachment Protein REceptors) between plasma membranes and endosomes including VAMP2, VAMP3, VAMP4, VAMP7 or VAMP8. In turn, PICALM-dependent SNARE endocytosis is required for the formation and maturation of autophagic precursors. Modulates thereby autophagy and the turnover of autophagy substrates such as MAPT/TAU or amyloid precursor protein cleaved C-terminal fragment (APP-CTF). The protein is Phosphatidylinositol-binding clathrin assembly protein (Picalm) of Mus musculus (Mouse).